Reading from the N-terminus, the 179-residue chain is Large ribosomal subunit protein uL5 (179 aa).

The protein belongs to the universal ribosomal protein uL5 family. As to quaternary structure, part of the 50S ribosomal subunit; part of the 5S rRNA/L5/L18/L25 subcomplex. Contacts the 5S rRNA and the P site tRNA. Forms a bridge to the 30S subunit in the 70S ribosome.

In terms of biological role, this is one of the proteins that bind and probably mediate the attachment of the 5S RNA into the large ribosomal subunit, where it forms part of the central protuberance. In the 70S ribosome it contacts protein S13 of the 30S subunit (bridge B1b), connecting the 2 subunits; this bridge is implicated in subunit movement. Contacts the P site tRNA; the 5S rRNA and some of its associated proteins might help stabilize positioning of ribosome-bound tRNAs. This Marinomonas sp. (strain MWYL1) protein is Large ribosomal subunit protein uL5.